A 533-amino-acid chain; its full sequence is Glucose-6-phosphate isomerase (533 aa).

Glu341 (proton donor) is an active-site residue. Active-site residues include His372 and Lys501.

Belongs to the GPI family.

Its subcellular location is the cytoplasm. It carries out the reaction alpha-D-glucose 6-phosphate = beta-D-fructose 6-phosphate. It functions in the pathway carbohydrate biosynthesis; gluconeogenesis. Its pathway is carbohydrate degradation; glycolysis; D-glyceraldehyde 3-phosphate and glycerone phosphate from D-glucose: step 2/4. Catalyzes the reversible isomerization of glucose-6-phosphate to fructose-6-phosphate. The polypeptide is Glucose-6-phosphate isomerase (Cereibacter sphaeroides (strain ATCC 17029 / ATH 2.4.9) (Rhodobacter sphaeroides)).